The primary structure comprises 156 residues: ATP synthase subunit b (156 aa).

The helical transmembrane segment at 11 to 31 threads the bilayer; the sequence is AIAFVLFVLFCMKYVWPPLMA.

This sequence belongs to the ATPase B chain family. F-type ATPases have 2 components, F(1) - the catalytic core - and F(0) - the membrane proton channel. F(1) has five subunits: alpha(3), beta(3), gamma(1), delta(1), epsilon(1). F(0) has three main subunits: a(1), b(2) and c(10-14). The alpha and beta chains form an alternating ring which encloses part of the gamma chain. F(1) is attached to F(0) by a central stalk formed by the gamma and epsilon chains, while a peripheral stalk is formed by the delta and b chains.

Its subcellular location is the cell inner membrane. Its function is as follows. F(1)F(0) ATP synthase produces ATP from ADP in the presence of a proton or sodium gradient. F-type ATPases consist of two structural domains, F(1) containing the extramembraneous catalytic core and F(0) containing the membrane proton channel, linked together by a central stalk and a peripheral stalk. During catalysis, ATP synthesis in the catalytic domain of F(1) is coupled via a rotary mechanism of the central stalk subunits to proton translocation. Component of the F(0) channel, it forms part of the peripheral stalk, linking F(1) to F(0). This is ATP synthase subunit b from Citrobacter koseri (strain ATCC BAA-895 / CDC 4225-83 / SGSC4696).